The following is a 144-amino-acid chain: Deoxyuridine 5'-triphosphate nucleotidohydrolase (144 aa).

Substrate is bound by residues 63–65 (RSG), Asn-76, and 80–82 (TVD).

The protein belongs to the dUTPase family. Mg(2+) is required as a cofactor.

It carries out the reaction dUTP + H2O = dUMP + diphosphate + H(+). It functions in the pathway pyrimidine metabolism; dUMP biosynthesis; dUMP from dCTP (dUTP route): step 2/2. Functionally, this enzyme is involved in nucleotide metabolism: it produces dUMP, the immediate precursor of thymidine nucleotides and it decreases the intracellular concentration of dUTP so that uracil cannot be incorporated into DNA. The sequence is that of Deoxyuridine 5'-triphosphate nucleotidohydrolase from Treponema denticola (strain ATCC 35405 / DSM 14222 / CIP 103919 / JCM 8153 / KCTC 15104).